Here is a 464-residue protein sequence, read N- to C-terminus: Cytoplasmic tRNA 2-thiolation protein 2 (464 aa).

This sequence belongs to the CTU2/NCS2 family.

It localises to the cytoplasm. The protein operates within tRNA modification; 5-methoxycarbonylmethyl-2-thiouridine-tRNA biosynthesis. Functionally, plays a central role in 2-thiolation of mcm(5)S(2)U at tRNA wobble positions of tRNA(Lys), tRNA(Glu) and tRNA(Gln). May act by forming a heterodimer with NCS6/CTU1 that ligates sulfur from thiocarboxylated URM1 onto the uridine of tRNAs at wobble position. This Oryza sativa subsp. japonica (Rice) protein is Cytoplasmic tRNA 2-thiolation protein 2.